We begin with the raw amino-acid sequence, 66 residues long: Beta-defensin 107A (66 aa).

An N-terminal signal peptide occupies residues 1 to 22 (MKIFFFIFAALILLAQIFQART). Intrachain disulfides connect C37/C51 and C41/C60.

This sequence belongs to the beta-defensin family.

It is found in the secreted. Has antibacterial activity. The protein is Beta-defensin 107A (DEFB107A) of Macaca fascicularis (Crab-eating macaque).